Reading from the N-terminus, the 160-residue chain is Ribosomal RNA large subunit methyltransferase H (160 aa).

Positions 44–63 are disordered; that stretch reads LPESRASNSATRKREEAVQI. S-adenosyl-L-methionine contacts are provided by residues Leu-76, Gly-108, and 127 to 132; that span reads LGKMTW.

The protein belongs to the RNA methyltransferase RlmH family. In terms of assembly, homodimer.

The protein localises to the cytoplasm. It catalyses the reaction pseudouridine(1915) in 23S rRNA + S-adenosyl-L-methionine = N(3)-methylpseudouridine(1915) in 23S rRNA + S-adenosyl-L-homocysteine + H(+). Specifically methylates the pseudouridine at position 1915 (m3Psi1915) in 23S rRNA. This Allorhizobium ampelinum (strain ATCC BAA-846 / DSM 112012 / S4) (Agrobacterium vitis (strain S4)) protein is Ribosomal RNA large subunit methyltransferase H.